The primary structure comprises 267 residues: Undecaprenyl-diphosphatase (267 aa).

8 helical membrane passes run 1 to 21 (MSYFEAFILALIQGLTEFLPI), 39 to 59 (QGLAFDVAVHVGTLMAVVIYF), 83 to 103 (AKLAWMIVIATIPACVFGLLM), 111 to 131 (LRSAYVIATTTIIFGLLLWWV), 144 to 164 (TGWKKALFIGIAQALAMIPGT), 189 to 209 (FLMSIPIITLAGGYLGMKLVT), 218 to 238 (FLLTGIVTSFISAYICIHFFL), and 246 to 266 (MTPFVIYRLILGFGLFAFLLM).

It belongs to the UppP family.

It is found in the cell inner membrane. The catalysed reaction is di-trans,octa-cis-undecaprenyl diphosphate + H2O = di-trans,octa-cis-undecaprenyl phosphate + phosphate + H(+). Its function is as follows. Catalyzes the dephosphorylation of undecaprenyl diphosphate (UPP). Confers resistance to bacitracin. The sequence is that of Undecaprenyl-diphosphatase from Vibrio campbellii (strain ATCC BAA-1116).